We begin with the raw amino-acid sequence, 576 residues long: Arginine--tRNA ligase (576 aa).

A 'HIGH' region motif is present at residues 122-132; the sequence is PNVAKQMHVGH.

It belongs to the class-I aminoacyl-tRNA synthetase family. Monomer.

The protein resides in the cytoplasm. It carries out the reaction tRNA(Arg) + L-arginine + ATP = L-arginyl-tRNA(Arg) + AMP + diphosphate. This chain is Arginine--tRNA ligase, found in Yersinia pseudotuberculosis serotype IB (strain PB1/+).